The primary structure comprises 355 residues: D-alanine--D-alanine ligase (355 aa).

Residues 143-350 (KTIFSNLKIP…IEQLVAKLVD (208 aa)) form the ATP-grasp domain. 178-233 (LKKLNFPFFVKPSNSGSSLGISKVINESEILQSLEKAQKIDSRILVEEGLEVREIE) contributes to the ATP binding site. Mg(2+) contacts are provided by D303, E317, and N319.

Belongs to the D-alanine--D-alanine ligase family. Requires Mg(2+) as cofactor. It depends on Mn(2+) as a cofactor.

The protein localises to the cytoplasm. It catalyses the reaction 2 D-alanine + ATP = D-alanyl-D-alanine + ADP + phosphate + H(+). Its pathway is cell wall biogenesis; peptidoglycan biosynthesis. Its function is as follows. Cell wall formation. This is D-alanine--D-alanine ligase from Prochlorococcus marinus (strain MIT 9215).